Reading from the N-terminus, the 286-residue chain is ATP synthase gamma chain (286 aa).

This sequence belongs to the ATPase gamma chain family. In terms of assembly, F-type ATPases have 2 components, CF(1) - the catalytic core - and CF(0) - the membrane proton channel. CF(1) has five subunits: alpha(3), beta(3), gamma(1), delta(1), epsilon(1). CF(0) has three main subunits: a, b and c.

Its subcellular location is the cell inner membrane. Its function is as follows. Produces ATP from ADP in the presence of a proton gradient across the membrane. The gamma chain is believed to be important in regulating ATPase activity and the flow of protons through the CF(0) complex. The polypeptide is ATP synthase gamma chain (Pseudomonas fluorescens (strain SBW25)).